The chain runs to 256 residues: Acetyl-coenzyme A carboxylase carboxyl transferase subunit alpha (256 aa).

Residues 1–236 (MSDVARILKE…KTAIVDELAE (236 aa)) enclose the CoA carboxyltransferase C-terminal domain.

The protein belongs to the AccA family. In terms of assembly, acetyl-CoA carboxylase is a heterohexamer composed of biotin carboxyl carrier protein (AccB), biotin carboxylase (AccC) and two subunits each of ACCase subunit alpha (AccA) and ACCase subunit beta (AccD).

It localises to the cytoplasm. It carries out the reaction N(6)-carboxybiotinyl-L-lysyl-[protein] + acetyl-CoA = N(6)-biotinyl-L-lysyl-[protein] + malonyl-CoA. The protein operates within lipid metabolism; malonyl-CoA biosynthesis; malonyl-CoA from acetyl-CoA: step 1/1. Its function is as follows. Component of the acetyl coenzyme A carboxylase (ACC) complex. First, biotin carboxylase catalyzes the carboxylation of biotin on its carrier protein (BCCP) and then the CO(2) group is transferred by the carboxyltransferase to acetyl-CoA to form malonyl-CoA. This chain is Acetyl-coenzyme A carboxylase carboxyl transferase subunit alpha, found in Streptococcus thermophilus (strain CNRZ 1066).